The sequence spans 266 residues: 3-methyl-2-oxobutanoate hydroxymethyltransferase (266 aa).

Residues aspartate 45 and aspartate 84 each contribute to the Mg(2+) site. 3-methyl-2-oxobutanoate contacts are provided by residues aspartate 45–serine 46, aspartate 84, and lysine 112. Glutamate 114 contacts Mg(2+). Glutamate 181 functions as the Proton acceptor in the catalytic mechanism.

Belongs to the PanB family. Homodecamer; pentamer of dimers. The cofactor is Mg(2+).

Its subcellular location is the cytoplasm. It carries out the reaction 3-methyl-2-oxobutanoate + (6R)-5,10-methylene-5,6,7,8-tetrahydrofolate + H2O = 2-dehydropantoate + (6S)-5,6,7,8-tetrahydrofolate. It functions in the pathway cofactor biosynthesis; (R)-pantothenate biosynthesis; (R)-pantoate from 3-methyl-2-oxobutanoate: step 1/2. Catalyzes the reversible reaction in which hydroxymethyl group from 5,10-methylenetetrahydrofolate is transferred onto alpha-ketoisovalerate to form ketopantoate. In Pseudomonas fluorescens (strain Pf0-1), this protein is 3-methyl-2-oxobutanoate hydroxymethyltransferase.